Here is a 134-residue protein sequence, read N- to C-terminus: Interleukin-5 (134 aa).

A signal peptide spans 1 to 19; it reads MRMLLHLSLLALGAAYVYA. An O-linked (GalNAc...) threonine glycan is attached at threonine 22. N-linked (GlcNAc...) asparagine glycosylation is found at asparagine 47 and asparagine 90.

It belongs to the IL-5 family. As to quaternary structure, homodimer; disulfide-linked. Interacts with IL5RA. Interacts with CSF2RB.

The protein localises to the secreted. Functionally, homodimeric cytokine expressed predominantly by T-lymphocytes and NK cells that plays an important role in the survival, differentiation, and chemotaxis of eosinophils. Also acts on activated and resting B-cells to induce immunoglobulin production, growth, and differentiation. Mechanistically, exerts its biological effects through a receptor composed of IL5RA subunit and the cytokine receptor common subunit beta/CSF2RB. Binding to the receptor leads to activation of various kinases including LYN, SYK and JAK2 and thereby propagates signals through the RAS-MAPK and JAK-STAT5 pathways respectively. This Macaca mulatta (Rhesus macaque) protein is Interleukin-5 (IL5).